The chain runs to 266 residues: MITIKIGGSIVDSLHPSAIPDIKKAAAGGVVLVHGGGKEVTKVCEQLGKEPRFVTSPGNIKSRYTDKETAEIFTMVMSGRINKCIVRMLQQHGVNAVGLSGIDGGLIRAERKSRLVIVNERGRKQAIEGGYTGRITSVNSELLETLLGKGIVPVVSPIAMGNEYELLNVDGDRAAANIAGATKSERILFVTDVDGLMMDEKLVSRLSAAEAEEIRPKIGPGMEKKVLAATEALKMGVREAIIARGSRENPVSAAIAHENCTVIGDG.

Substrate-binding positions include Gly36 to Gly37, Arg63, and Asn168.

Belongs to the acetylglutamate kinase family. LysZ subfamily.

It localises to the cytoplasm. It carries out the reaction [amino-group carrier protein]-C-terminal-N-(1,4-dicarboxybutan-1-yl)-L-glutamine + ATP = [amino-group carrier protein]-C-terminal-N-(1-carboxy-5-phosphooxy-5-oxopentan-1-yl)-L-glutamine + ADP. The enzyme catalyses [amino-group carrier protein]-C-terminal-gamma-(L-glutamyl)-L-glutamate + ATP = [amino-group carrier protein]-C-terminal-gamma-(5-phospho-L-glutamyl)-L-glutamate + ADP. Its pathway is amino-acid biosynthesis; L-lysine biosynthesis via AAA pathway; L-lysine from L-alpha-aminoadipate (Thermus route): step 2/5. It functions in the pathway amino-acid biosynthesis; L-arginine biosynthesis. In terms of biological role, involved in both the arginine and lysine biosynthetic pathways. Phosphorylates the LysW-bound precursors glutamate (for arginine biosynthesis), respectively alpha-aminoadipate (for lysine biosynthesis). This is Putative [LysW]-aminoadipate/[LysW]-glutamate kinase from Cenarchaeum symbiosum (strain A).